Consider the following 96-residue polypeptide: Essential MCU regulator, mitochondrial (96 aa).

A mitochondrion-targeting transit peptide spans 1-34 (MIVSRLTFPLQAAKLVARKAAGNPSNSIIQRRHM). The helical transmembrane segment at 52–72 (PFGLFAIFCAVIPGLFIGATI) threads the bilayer.

The protein belongs to the SMDT1/EMRE family.

It is found in the mitochondrion inner membrane. In terms of biological role, essential regulatory subunit of the mitochondrial calcium uniporter (mcu) channel, a protein that mediates calcium uptake into mitochondria. The sequence is that of Essential MCU regulator, mitochondrial from Drosophila pseudoobscura pseudoobscura (Fruit fly).